The sequence spans 303 residues: Hemolysin E (303 aa).

Cys-87 and Cys-285 are oxidised to a cystine. The helical transmembrane segment at 179 to 199 (AGAAAGIVAGPFGLIISYSIA) threads the bilayer.

This sequence belongs to the hemolysin E family. Monomer and oligomer. In periplasm, it is present as a monomer, while in outer membrane vesicles, it oligomerizes to form a pore structure that is active. The pore is formed by a dodecamer. Post-translationally, in periplasm, it forms a disulfide bond, which prevents the oligomerization. In outer membrane vesicles, the redox status prevents formation of the disulfide bond, leading to oligomerization and pore formation.

It localises to the secreted. The protein localises to the periplasm. Its subcellular location is the host cell membrane. In terms of biological role, toxin, which has some hemolytic activity towards mammalian cells. Acts by forming a pore-like structure upon contact with mammalian cells. This chain is Hemolysin E (hlyE), found in Salmonella paratyphi A (strain ATCC 9150 / SARB42).